The sequence spans 134 residues: Cytochrome c-550 (134 aa).

Glutamine 1 is subject to Pyrrolidone carboxylic acid. Heme c is bound by residues cysteine 15, cysteine 18, histidine 19, and methionine 100.

Binds 1 heme c group covalently per subunit.

Electron donor for nitrous-oxide reductase. The protein is Cytochrome c-550 of Paracoccus pantotrophus (Thiosphaera pantotropha).